The chain runs to 634 residues: DNA gyrase subunit B (634 aa).

The 115-residue stretch at arginine 416 to proline 530 folds into the Toprim domain. 3 residues coordinate Mg(2+): glutamate 422, aspartate 495, and aspartate 497.

Belongs to the type II topoisomerase GyrB family. In terms of assembly, heterotetramer, composed of two GyrA and two GyrB chains. In the heterotetramer, GyrA contains the active site tyrosine that forms a transient covalent intermediate with DNA, while GyrB binds cofactors and catalyzes ATP hydrolysis. Mg(2+) serves as cofactor. Mn(2+) is required as a cofactor. Requires Ca(2+) as cofactor.

It is found in the cytoplasm. The enzyme catalyses ATP-dependent breakage, passage and rejoining of double-stranded DNA.. A type II topoisomerase that negatively supercoils closed circular double-stranded (ds) DNA in an ATP-dependent manner to modulate DNA topology and maintain chromosomes in an underwound state. Negative supercoiling favors strand separation, and DNA replication, transcription, recombination and repair, all of which involve strand separation. Also able to catalyze the interconversion of other topological isomers of dsDNA rings, including catenanes and knotted rings. Type II topoisomerases break and join 2 DNA strands simultaneously in an ATP-dependent manner. The protein is DNA gyrase subunit B of Borreliella burgdorferi (strain ATCC 35210 / DSM 4680 / CIP 102532 / B31) (Borrelia burgdorferi).